The primary structure comprises 147 residues: Hemoglobin subunit beta-2 (147 aa).

Residue valine 2 is modified to N-acetylvaline. A Globin domain is found at 3-147 (HLTDAEKATV…VASALAHKYH (145 aa)). Residue serine 13 is modified to Phosphoserine. N6-succinyllysine is present on lysine 18. Phosphoserine occurs at positions 51 and 53. Positions 64 and 93 each coordinate heme b. Residue arginine 105 is modified to Asymmetric dimethylarginine. Threonine 124 carries the phosphothreonine modification. Position 126 is a phosphoserine; in variant Ser-126 (cysteine 126).

This sequence belongs to the globin family. Heterotetramer of two alpha chains and two beta chains. As to expression, red blood cells.

Its function is as follows. Involved in oxygen transport from the lung to the various peripheral tissues. This chain is Hemoglobin subunit beta-2, found in Rattus norvegicus (Rat).